We begin with the raw amino-acid sequence, 711 residues long: MLNPIVRKFQYGQHTVTLETGMMARQATAAVMVSMDDTAVFVTVVGQKKAKPGQDFFPLTVNYQERTYAAGRIPGSFFRREGRPSEGETLIARLIDRPIRPLFPEGFVNEVQVIATVVSVNPQVNPDIVAMIGASAALSLSGIPFNGPIGAARVGYINDQYVLNPTQDELKESKLDLVVAGTEAAVLMVESEAELLSEDQMLGAVVFGHEQQQVVIQNINELVKEAGKPRWDWQPEPVNEALNARVAALAEARLSDAYRITDKQERYAQVDVIKSETIATLLAEDETLDENELGEILHAIEKNVVRSRVLAGEPRIDGREKDMIRGLDVRTGVLPRTHGSALFTRGETQALVTATLGTARDAQVLDELMGERTDTFLFHYNFPPYSVGETGMVGSPKRREIGHGRLAKRGVLAVMPDMDKFPYTVRVVSEITESNGSSSMASVCGASLALMDAGVPIKAAVAGIAMGLVKEGDNYVVLSDILGDEDHLGDMDFKVAGSRDGISALQMDIKIEGITKEIMQVALNQAKGARLHILGVMEQAINAPRGDISEFAPRIHTIKINPDKIKDVIGKGGSVIRALTEETGTTIEIEDDGTVKIAATDGEKAKHAIRRIEEITAEIEVGRVYNGKVTRIVDFGAFVAIGGGKEGLVHISQIADKRVEKVTDYLQMGQEVPVKVLEVDRQGRIRLSIKEATEQSQPAAAPEAPAAEQGE.

2 residues coordinate Mg(2+): Asp486 and Asp492. The 60-residue stretch at 553–612 folds into the KH domain; sequence PRIHTIKINPDKIKDVIGKGGSVIRALTEETGTTIEIEDDGTVKIAATDGEKAKHAIRRI. Residues 622 to 690 enclose the S1 motif domain; the sequence is GRVYNGKVTR…RQGRIRLSIK (69 aa). A disordered region spans residues 689–711; that stretch reads IKEATEQSQPAAAPEAPAAEQGE. A compositionally biased stretch (low complexity) spans 694–711; it reads EQSQPAAAPEAPAAEQGE.

This sequence belongs to the polyribonucleotide nucleotidyltransferase family. In terms of assembly, component of the RNA degradosome, which is a multiprotein complex involved in RNA processing and mRNA degradation. Mg(2+) is required as a cofactor.

The protein localises to the cytoplasm. The enzyme catalyses RNA(n+1) + phosphate = RNA(n) + a ribonucleoside 5'-diphosphate. In terms of biological role, involved in mRNA degradation. Catalyzes the phosphorolysis of single-stranded polyribonucleotides processively in the 3'- to 5'-direction. This is Polyribonucleotide nucleotidyltransferase from Escherichia coli O6:K15:H31 (strain 536 / UPEC).